A 173-amino-acid polypeptide reads, in one-letter code: UPF0316 protein Amet_0954 (173 aa).

The next 3 helical transmembrane spans lie at 3–23 (LVLG…MGTV), 38–58 (AIGF…LEAL), and 61–81 (PVNI…GIYI).

Belongs to the UPF0316 family.

The protein localises to the cell membrane. This Alkaliphilus metalliredigens (strain QYMF) protein is UPF0316 protein Amet_0954.